A 485-amino-acid chain; its full sequence is Elongation factor TuB, chloroplastic (485 aa).

A chloroplast-targeting transit peptide spans M1–R76. The tr-type G domain occupies K86–Q290. The segment at G95 to T102 is G1. G95–T102 lines the GTP pocket. The interval G136 to N140 is G2. The interval D157–G160 is G3. GTP is bound by residues D157–H161 and N212–D215. A G4 region spans residues N212 to D215. Residues S250–L252 form a G5 region.

The protein belongs to the TRAFAC class translation factor GTPase superfamily. Classic translation factor GTPase family. EF-Tu/EF-1A subfamily.

It is found in the plastid. Its subcellular location is the chloroplast. In terms of biological role, this protein promotes the GTP-dependent binding of aminoacyl-tRNA to the A-site of ribosomes during protein biosynthesis. The polypeptide is Elongation factor TuB, chloroplastic (TUFB) (Nicotiana sylvestris (Wood tobacco)).